Here is a 52-residue protein sequence, read N- to C-terminus: Eukaryotic translation initiation factor 2 subunit 1 (52 aa).

An S1 motif domain is found at 16–52 (EDVVMVNVRSIAEMGAYVSLLEYNNIEGRILLSELSR). Position 48 is a phosphoserine; by HRI (Ser48). Residue Ser51 is modified to Phosphoserine.

It belongs to the eIF-2-alpha family. Eukaryotic translation initiation factor 2 eIF2 is a heterotrimeric complex composed of an alpha (EIF2S1), a beta (EIF2S2) and a gamma (EIF2S3) chain. eIF2 is member of the 43S pre-initiation complex (43S PIC). eIF2 forms a complex with at least CELF1/CUGBP1, CALR, CALR3, EIF2S1, EIF2S2, HSP90B1 and HSPA5. Interaction with METAP2 protects EIF2S1 from inhibitory phosphorylation. Interacts with ABCF1. Associates with ribosomes. Interacts with DDX3X in an RNA-independent manner. Phosphorylation at Ser-48 and Ser-51 stabilizes the eIF-2/GDP/eIF2B complex and prevents GDP/GTP exchange reaction, thus impairing the recycling of eIF-2 between successive rounds of initiation and leading to global inhibition of translation, while concomitantly initiating the preferential translation of integrated stress response (ISR)-specific mRNAs. Substrate for at least 4 kinases: EIF2AK1/HRI, EIF2AK2/PKR, EIF2AK3/PERK and EIF2AK4/GCN2. Phosphorylation on Ser-51 by the EIF2AK4/GCN2 protein kinase occurs in response to amino acid starvation and UV irradiation. Phosphorylation at Ser-51 by the EIF2AK3/PERK protein kinase occurs in response to the unfolded protein response. Phosphorylation at Ser-51 by EIF2AK1/HRI in response to mitochondrial damage promotes relocalization to the mitochondrial surface.

The protein localises to the cytoplasm. It is found in the stress granule. It localises to the cytosol. Its subcellular location is the mitochondrion. Its activity is regulated as follows. Activity is regulated by phosphorylation at Ser-49 and Ser-52, which stabilizes the eIF2/GDP/eIF2B complex and prevents the eIF2B-mediated exchange of GDP for GTP, thereby preventing the formation of the 43S pre-initiation complex (43S PIC). This results in the global attenuation of 5' cap-dependent protein synthesis and concomitant translation of ISR-specific mRNAs that contain a short upstream open reading frame (uORF) in their 5' UTR, such as ATF4, ATF5, DDIT3/CHOP and PPP1R15A/GADD34. In terms of biological role, member of the eIF2 complex that functions in the early steps of protein synthesis by forming a ternary complex with GTP and initiator tRNA. This complex binds to a 40S ribosomal subunit, followed by mRNA binding to form a 43S pre-initiation complex. Junction of the 60S ribosomal subunit to form the 80S initiation complex is preceded by hydrolysis of the GTP bound to eIF2 and release of an eIF2-GDP binary complex. In order for eIF2 to recycle and catalyze another round of initiation, the GDP bound to eIF2 must exchange with GTP by way of a reaction catalyzed by eIF2B. EIF2S1/eIF2-alpha is a key component of the integrated stress response (ISR), required for adaptation to various stress: phosphorylation by metabolic-stress sensing protein kinases (EIF2AK1/HRI, EIF2AK2/PKR, EIF2AK3/PERK and EIF2AK4/GCN2) in response to stress converts EIF2S1/eIF2-alpha in a global protein synthesis inhibitor, leading to a attenuation of cap-dependent translation, while concomitantly initiating the preferential translation of ISR-specific mRNAs, such as the transcriptional activators ATF4 and QRICH1, and hence allowing ATF4- and QRICH1-mediated reprogramming. EIF2S1/eIF2-alpha also acts as an activator of mitophagy in response to mitochondrial damage: phosphorylation by EIF2AK1/HRI promotes relocalization to the mitochondrial surface, thereby triggering PRKN-independent mitophagy. The polypeptide is Eukaryotic translation initiation factor 2 subunit 1 (EIF2S1) (Oryctolagus cuniculus (Rabbit)).